A 656-amino-acid polypeptide reads, in one-letter code: UvrABC system protein B (656 aa).

The 386-residue stretch at 24-409 (QGVRNRTPSQ…QGHIVEQILR (386 aa)) folds into the Helicase ATP-binding domain. ATP is bound at residue 37-44 (GTTGSGKT). The Beta-hairpin signature appears at 90 to 113 (YYDYYQPEAYIARNDTYIEKSLLI). Residues 426 to 589 (QVDDLLEEIR…ITPKPIIKAI (164 aa)) enclose the Helicase C-terminal domain. The 36-residue stretch at 616–651 (EKLIKKYENLMLQAANAFRFDEAAQYRDKMKAAKEQ) folds into the UVR domain.

The protein belongs to the UvrB family. Forms a heterotetramer with UvrA during the search for lesions. Interacts with UvrC in an incision complex.

It is found in the cytoplasm. In terms of biological role, the UvrABC repair system catalyzes the recognition and processing of DNA lesions. A damage recognition complex composed of 2 UvrA and 2 UvrB subunits scans DNA for abnormalities. Upon binding of the UvrA(2)B(2) complex to a putative damaged site, the DNA wraps around one UvrB monomer. DNA wrap is dependent on ATP binding by UvrB and probably causes local melting of the DNA helix, facilitating insertion of UvrB beta-hairpin between the DNA strands. Then UvrB probes one DNA strand for the presence of a lesion. If a lesion is found the UvrA subunits dissociate and the UvrB-DNA preincision complex is formed. This complex is subsequently bound by UvrC and the second UvrB is released. If no lesion is found, the DNA wraps around the other UvrB subunit that will check the other stand for damage. The sequence is that of UvrABC system protein B from Chlamydia abortus (strain DSM 27085 / S26/3) (Chlamydophila abortus).